The sequence spans 468 residues: UDP-N-acetylmuramoyl-L-alanine--L-glutamate ligase (468 aa).

122–128 lines the ATP pocket; it reads GTKGKST.

Belongs to the MurCDEF family. MurD2 subfamily.

The protein localises to the cytoplasm. It catalyses the reaction UDP-N-acetyl-alpha-D-muramoyl-L-alanine + L-glutamate + ATP = UDP-N-acetyl-alpha-D-muramoyl-L-alanyl-L-glutamate + ADP + phosphate + H(+). The protein operates within cell wall biogenesis; peptidoglycan biosynthesis. In terms of biological role, cell wall formation. Catalyzes the addition of L-glutamate to the nucleotide precursor UDP-N-acetylmuramoyl-L-alanine. This chain is UDP-N-acetylmuramoyl-L-alanine--L-glutamate ligase, found in Xylella fastidiosa (strain Temecula1 / ATCC 700964).